The sequence spans 632 residues: tRNA-guanine(15) transglycosylase (632 aa).

The active-site Nucleophile is the D86. Positions 121 and 186 each coordinate substrate. Positions 553 to 628 (NLRVFVKNES…IAVKIHEGRD (76 aa)) constitute a PUA domain.

Belongs to the archaeosine tRNA-ribosyltransferase family. Zn(2+) is required as a cofactor.

It carries out the reaction guanosine(15) in tRNA + 7-cyano-7-deazaguanine = 7-cyano-7-carbaguanosine(15) in tRNA + guanine. It participates in tRNA modification; archaeosine-tRNA biosynthesis. Exchanges the guanine residue with 7-cyano-7-deazaguanine (preQ0) at position 15 in the dihydrouridine loop (D-loop) of archaeal tRNAs. The chain is tRNA-guanine(15) transglycosylase from Thermoplasma volcanium (strain ATCC 51530 / DSM 4299 / JCM 9571 / NBRC 15438 / GSS1).